Reading from the N-terminus, the 490-residue chain is Calcium-dependent protein kinase 12 (490 aa).

Residues 22–280 form the Protein kinase domain; the sequence is YFLGQVLGQG…AHQVLCHPWI (259 aa). ATP contacts are provided by residues 28–36 and K51; that span reads LGQGQFGTT. D146 serves as the catalytic Proton acceptor. A Phosphoserine modification is found at S186. Residues 286–316 are autoinhibitory domain; sequence APDKPLDCAVVSRLKKFSAMNKLKKMALRVI. EF-hand domains follow at residues 323–358, 359–394, 395–430, and 434–464; these read EEIG…VGSE, LMES…LNKL, EREE…FGIN, and LDEM…GNGT. 20 residues coordinate Ca(2+): D336, D338, S340, T342, E347, D372, D374, S376, T378, E383, D408, D410, S412, Y414, E419, D442, D444, D446, Q448, and E453.

The protein belongs to the protein kinase superfamily. Ser/Thr protein kinase family. CDPK subfamily. As to quaternary structure, interacts weakly with DI19. As to expression, ubiquitously expressed.

It catalyses the reaction L-seryl-[protein] + ATP = O-phospho-L-seryl-[protein] + ADP + H(+). It carries out the reaction L-threonyl-[protein] + ATP = O-phospho-L-threonyl-[protein] + ADP + H(+). Its activity is regulated as follows. Activated by calcium. Autophosphorylation may play an important role in the regulation of the kinase activity. Functionally, may play a role in signal transduction pathways that involve calcium as a second messenger. The chain is Calcium-dependent protein kinase 12 (CPK12) from Arabidopsis thaliana (Mouse-ear cress).